A 57-amino-acid chain; its full sequence is Conotoxin reg3.17 (57 aa).

The signal sequence occupies residues 1–16 (TICLLLFPLTVVPLDG). The propeptide occupies 17 to 44 (DQPAHQPAVRKHNIKSAVQLRQWDEEQQ). 3 cysteine pairs are disulfide-bonded: Cys45-Cys57, Cys46-Cys53, and Cys50-Cys56.

It belongs to the conotoxin M superfamily. Expressed by the venom duct.

Its subcellular location is the secreted. This Conus regius (Crown cone) protein is Conotoxin reg3.17.